Here is a 126-residue protein sequence, read N- to C-terminus: MEKKIALIAHDKKKEDLVNFVKQNYLFLSKFKLIATGTTGSKIQQATDLTIFKYKSGPMGGDQQIGAEVAEGNILAIFFFRDPLTSQPHEPDVSALIRLCDVHKIPLATNVKTAEILIKGLESLIF.

Positions 1-126 (MEKKIALIAH…LIKGLESLIF (126 aa)) constitute an MGS-like domain. Substrate is bound by residues H10, K14, 36–39 (TGTT), and 56–57 (SG). The active-site Proton donor/acceptor is D62. Position 89 (H89) interacts with substrate.

This sequence belongs to the methylglyoxal synthase family.

The enzyme catalyses dihydroxyacetone phosphate = methylglyoxal + phosphate. In terms of biological role, catalyzes the formation of methylglyoxal from dihydroxyacetone phosphate. The polypeptide is Methylglyoxal synthase (Borreliella burgdorferi (strain ATCC 35210 / DSM 4680 / CIP 102532 / B31) (Borrelia burgdorferi)).